Consider the following 435-residue polypeptide: Legumain (435 aa).

Residues 1 to 17 form the signal peptide; sequence MTWRVAVLLSLVLGAGA. The N-linked (GlcNAc...) asparagine glycan is linked to N93. The active site involves H150. Residue N169 is glycosylated (N-linked (GlcNAc...) asparagine). C191 acts as the Nucleophile in catalysis. N215, N265, and N274 each carry an N-linked (GlcNAc...) asparagine glycan. A propeptide spanning residues 326–435 is cleaved from the precursor; the sequence is NMKESQVLVG…AMDKVCLSHY (110 aa). 2 disulfide bridges follow: C380/C414 and C392/C431.

Belongs to the peptidase C13 family. Homodimer before autocatalytic removal of the propeptide. Monomer after autocatalytic processing. May interact with integrins. Post-translationally, activated by autocatalytic processing at pH 4. As to expression, detected in kidney cortex (at protein level).

Its subcellular location is the lysosome. It catalyses the reaction Hydrolysis of proteins and small molecule substrates at -Asn-|-Xaa- bonds.. Its function is as follows. Has a strict specificity for hydrolysis of asparaginyl bonds. Can also cleave aspartyl bonds slowly, especially under acidic conditions. Involved in the processing of proteins for MHC class II antigen presentation in the lysosomal/endosomal system. Also involved in MHC class I antigen presentation in cross-presenting dendritic cells by mediating cleavage and maturation of Perforin-2 (MPEG1), thereby promoting antigen translocation in the cytosol. Required for normal lysosomal protein degradation in renal proximal tubules. Required for normal degradation of internalized EGFR. Plays a role in the regulation of cell proliferation via its role in EGFR degradation. This is Legumain (Lgmn) from Rattus norvegicus (Rat).